We begin with the raw amino-acid sequence, 176 residues long: MILSDWDIRVYLEKKLLVINPLFPDTIRENGVDLRFGYQFCRFKKDQNIIVDTARDPVDKTLVCEETDENNGIIINPLEHVLATTLEWVEMPNDLIGFVNLRSTFARYSLYIPPTIIDAGFKGNITIELIGGSIPVKVYPKQRFLHVIFARTSSPVYRPYSGKYQKQRGVTPPKPD.

DCTP contacts are provided by residues 102–107 and Asp118; that span reads RSTFAR. Glu128 (proton donor/acceptor) is an active-site residue. DCTP is bound by residues Tyr160, Lys166, and Gln167.

Belongs to the dCTP deaminase family. In terms of assembly, homotrimer.

The catalysed reaction is dCTP + H2O + H(+) = dUTP + NH4(+). It participates in pyrimidine metabolism; dUMP biosynthesis; dUMP from dCTP (dUTP route): step 1/2. In terms of biological role, catalyzes the deamination of dCTP to dUTP. The chain is dCTP deaminase from Staphylothermus marinus (strain ATCC 43588 / DSM 3639 / JCM 9404 / F1).